Consider the following 280-residue polypeptide: Elongation factor Ts (280 aa).

The involved in Mg(2+) ion dislocation from EF-Tu stretch occupies residues 79–82 (TDFV).

The protein belongs to the EF-Ts family.

The protein resides in the cytoplasm. Its function is as follows. Associates with the EF-Tu.GDP complex and induces the exchange of GDP to GTP. It remains bound to the aminoacyl-tRNA.EF-Tu.GTP complex up to the GTP hydrolysis stage on the ribosome. The protein is Elongation factor Ts of Vibrio cholerae serotype O1 (strain ATCC 39541 / Classical Ogawa 395 / O395).